The primary structure comprises 601 residues: Probable HECT-type ubiquitin ligase-interacting protein creD (601 aa).

Disordered regions lie at residues 374–397 and 454–496; these read EVDPSGYRTPGPGSGPGTPFGTLS and VSTD…GMAT. Low complexity predominate over residues 455–473; sequence STDSFGPSSGSNSQSPASP. A compositionally biased stretch (basic and acidic residues) spans 475 to 489; that stretch reads LSRRPSDEGYHDHDY.

It belongs to the arrestin family. Interacts with hulA.

Its function is as follows. Component of the regulatory network controlling carbon source utilization through ubiquitination and deubiquitination involving creA, creB, creC, creD and acrB. May be involved in signaling by recognizing appropriately phosphorylated substrates via its arrestin domains and then recruit a HECT-type ubiquitin ligase such as hulA, leading to ubiquitination of the substrate, providing a link between ubiquitination and phosphorylation in protein regulation and stability. The chain is Probable HECT-type ubiquitin ligase-interacting protein creD (creD) from Aspergillus fumigatus (strain CBS 144.89 / FGSC A1163 / CEA10) (Neosartorya fumigata).